Here is an 85-residue protein sequence, read N- to C-terminus: Beta-insect depressant toxin Lqh-dprIT3a (85 aa).

The N-terminal stretch at 1–21 is a signal peptide; that stretch reads MKLLLLLTISASMLIEGLVNA. The LCN-type CS-alpha/beta domain occupies 22–82; it reads DGYIRGGDGC…EWDYETNTCG (61 aa). Disulfide bonds link Cys-31–Cys-81, Cys-35–Cys-56, Cys-42–Cys-63, and Cys-46–Cys-65. A Glycine amide modification is found at Gly-82.

This sequence belongs to the long (4 C-C) scorpion toxin superfamily. Sodium channel inhibitor family. Beta subfamily. As to expression, expressed by the venom gland.

It localises to the secreted. Depressant insect beta-toxins cause a transient contraction paralysis followed by a slow flaccid paralysis. They bind voltage-independently at site-4 of sodium channels (Nav) and block action potentials, primarily by depolarizing the axonal membrane and suppressing the sodium current. This depressant toxin is active only on insects. It is found in a relatively small amount in the venom, and its activity on insects is 10-fold higher compared to other known depressant toxins. In Leiurus hebraeus (Hebrew deathstalker scorpion), this protein is Beta-insect depressant toxin Lqh-dprIT3a.